The chain runs to 404 residues: Propionate kinase (404 aa).

The protein belongs to the acetokinase family. PduW subfamily.

The protein resides in the cytoplasm. It carries out the reaction propanoate + ATP = propanoyl phosphate + ADP. Its pathway is polyol metabolism; 1,2-propanediol degradation. Its function is as follows. Works with phosphate acetyltransferase (pta) to capture exogenous propionate and regenerate propionyl-CoA during degradation of 1,2-propanediol (1,2-PD). This is Propionate kinase from Citrobacter koseri (strain ATCC BAA-895 / CDC 4225-83 / SGSC4696).